The primary structure comprises 235 residues: Zorya protein ZorB (235 aa).

Residues 25–44 (LMAGLMMVFMFISIAYMHYV) form a helical membrane-spanning segment. The 139-residue stretch at 87 to 225 (QTLEVRFKSP…RVTFKVVTNA (139 aa)) folds into the OmpA-like domain.

Belongs to the MotB family.

Its subcellular location is the cell inner membrane. Its function is as follows. Component of antiviral defense system Zorya type II, composed of ZorA, ZorB and ZorE. Expression of Zorya type II in E.coli (strain MG1655) confers resistance to phages SECphi7 and T7. While most T7 infected Zorya-containing cells undergo abortive infection, a minority produce viable phage progeny. These eventually accumulate to a high multiplicity of infection, leading to culture collapse by 170 minutes after initial infection. ZorA and ZorB probably assemble in the cell inner membrane and exert their effect there. This Escherichia coli (strain ATCC 8739 / DSM 1576 / NBRC 3972 / NCIMB 8545 / WDCM 00012 / Crooks) protein is Zorya protein ZorB.